The primary structure comprises 595 residues: Flap endonuclease 1 (595 aa).

Residues 1–106 are N-domain; the sequence is MGIKGLTKFI…SELEKRGEKR (106 aa). Aspartate 34 contributes to the Mg(2+) binding site. DNA-binding residues include arginine 47 and arginine 72. Mg(2+) is bound by residues aspartate 88, glutamate 160, glutamate 162, aspartate 181, and aspartate 183. Residues 124–267 form an I-domain region; the sequence is EIKKQSGRTV…KTAYNLIKEY (144 aa). DNA is bound at residue glutamate 160. Residues glycine 245 and aspartate 247 each coordinate DNA. Aspartate 247 is a Mg(2+) binding site. The segment at 350–358 is interaction with PCNA; that stretch reads TQRRLDNFF. Positions 370–493 are disordered; that stretch reads NEESQIKKEV…TGDVYSFPNG (124 aa). A compositionally biased stretch (polar residues) spans 392–401; the sequence is NDSSTKLNSK. Over residues 406-425 the composition is skewed to basic and acidic residues; sequence PKGEKESKTEKDDGDTHNGN. Residues 426–436 are compositionally biased toward acidic residues; it reads DNEEEGGEGET. The segment covering 461 to 475 has biased composition (basic and acidic residues); that stretch reads HKSDSESGNVKKEST.

The protein belongs to the XPG/RAD2 endonuclease family. FEN1 subfamily. As to quaternary structure, interacts with PCNA. Three molecules of FEN1 bind to one PCNA trimer with each molecule binding to one PCNA monomer. PCNA stimulates the nuclease activity without altering cleavage specificity. Mg(2+) is required as a cofactor. In terms of processing, phosphorylated. Phosphorylation upon DNA damage induces relocalization to the nuclear plasma.

The protein localises to the nucleus. Its subcellular location is the nucleolus. It localises to the nucleoplasm. It is found in the mitochondrion. Functionally, structure-specific nuclease with 5'-flap endonuclease and 5'-3' exonuclease activities involved in DNA replication and repair. During DNA replication, cleaves the 5'-overhanging flap structure that is generated by displacement synthesis when DNA polymerase encounters the 5'-end of a downstream Okazaki fragment. It enters the flap from the 5'-end and then tracks to cleave the flap base, leaving a nick for ligation. Also involved in the long patch base excision repair (LP-BER) pathway, by cleaving within the apurinic/apyrimidinic (AP) site-terminated flap. Acts as a genome stabilization factor that prevents flaps from equilibrating into structures that lead to duplications and deletions. Also possesses 5'-3' exonuclease activity on nicked or gapped double-stranded DNA, and exhibits RNase H activity. Also involved in replication and repair of rDNA and in repairing mitochondrial DNA. The protein is Flap endonuclease 1 of Plasmodium knowlesi (strain H).